The following is a 330-amino-acid chain: Aquaporin-3 (330 aa).

Residues 1–40 (MSATPIIHLRDVKKRTGVLNAWERVRNKPQVHWAMECFAE) are Cytoplasmic-facing. The helical transmembrane segment at 41 to 61 (ALGVFFYVYFGLGSTAAWVIG) threads the bilayer. The Extracellular segment spans residues 62 to 71 (NILKQSGLSS). Residues 72 to 92 (VFQIGFAYAFGILFAIGVCAA) traverse the membrane as a helical segment. The Cytoplasmic portion of the chain corresponds to 93–124 (TSGGHFNPCVTIAFTIFRGFPPLKAVRYIVAQ). The short motif at 99–101 (NPC) is the NPA 1 element. Residues 125–145 (ILGAYIASALVYNQWKVLIVE) form a helical membrane-spanning segment. Over 146-157 (SELLLKQAGVYE) the chain is Extracellular. Residues 158–178 (TTMFTPNGPAGIFALYLLPGA) form a helical membrane-spanning segment. Residues 179–183 (QTLPR) are Cytoplasmic-facing. The helical transmembrane segment at 184–204 (AFLNEFVNCFVLALVIWAALD) threads the bilayer. Topologically, residues 205–207 (PTS) are extracellular. Residues 208-228 (FMIPPVMAPFIIAAAYAGSIW) form a helical membrane-spanning segment. Residues 229–264 (GYAVPAISLNSARDIGCRLFALTIWGKSAAGGSYSA) lie on the Cytoplasmic side of the membrane. The NPA 2 motif lies at 238 to 240 (NSA). The helical transmembrane segment at 265–285 (IAALVNIPATLLAAVVYELFL) threads the bilayer. Residues 286-330 (VDSDRVVAGSHLEFMNVAANHRRHRQQAEDDNLVEADDSSQEKPV) lie on the Extracellular side of the membrane. Residues 308 to 330 (RHRQQAEDDNLVEADDSSQEKPV) are disordered. Positions 314 to 324 (EDDNLVEADDS) are enriched in acidic residues.

This sequence belongs to the MIP/aquaporin (TC 1.A.8) family.

Its subcellular location is the cell membrane. The enzyme catalyses H2O(in) = H2O(out). It carries out the reaction CO2(out) = CO2(in). Functionally, water channel required to facilitate the transport of water across membranes. Also mediates the transport of carbon dioxide across the membrane. The protein is Aquaporin-3 of Laccaria bicolor (Bicoloured deceiver).